Here is a 932-residue protein sequence, read N- to C-terminus: Receptor-like protein 9a (932 aa).

The N-terminal stretch at 1–28 is a signal peptide; the sequence is MLIFTIPQFFFAAWVMVVSLQMQGYISC. The Extracellular portion of the chain corresponds to 29–888; it reads IEKERKGLLE…DDETAIDMET (860 aa). Residues asparagine 53, asparagine 80, and asparagine 90 are each glycosylated (N-linked (GlcNAc...) asparagine). LRR repeat units lie at residues 97 to 122, 126 to 152, 154 to 174, 175 to 200, 202 to 222, 223 to 246, 247 to 273, 275 to 295, 296 to 320, 322 to 345, 346 to 368, 370 to 393, 394 to 417, 418 to 441, 443 to 466, 468 to 491, 492 to 514, 516 to 535, 536 to 560, 561 to 583, 585 to 605, 606 to 629, 631 to 652, 653 to 676, 745 to 769, 770 to 792, 794 to 817, and 819 to 842; these read FEELRTLNLYDFGCTGWFDDIHGYKS, LKKLEILDMGNNEVNNSVLPFLNAASS, RTLILHGNNMEGTFPMKELKD, LSNLELLDLSGNLLNGPVPGLAVLHK, HALDLSDNTFSGSLGREGLCQ, LKNLQELDLSQNEFTGPFPQCFSS, LTQLQVLDMSSNQFNGTLPSVISNLDS, EYLSLSDNKFEGFFSFDLIAN, LSKLKVFKLSSKSSLLHIESEISLQ, KFRLSVIDLKYCNLEAVPSFLQQQ, KDLRLINLSNNKLTGISPSWFLE, YPKLRVLLLWNNSFTIFHLPRLLV, HSLHVLDLSVNKFDEWLPNNIGHV, LPNISHLNLSNNGFQGNLPSSFSE, KKIFFLDLSHNNLSGSLPKKFCIG, SSLSILKLSYNRFSGKIFPQPMKL, ESLRVLIADNNQFTEITDVLIHS, GLVFLELSNNSLQGVIPSWF, GGFYFLYLSVSDNLLNGTIPSTLFN, VSFQLLDLSRNKFSGNLPSHFSF, HMGLLYLHDNEFSGPVPSTLL, ENVMLLDLRNNKLSGTIPRFVSNR, FLYLLLRGNALTGHIPTSLCEL, KSIRVLDLANNRLNGSIPPCLNNV, FKFMFGLDFSSNELIGEIPRELGDF, QRIRALNLSHNSLSGLVPESFSN, TDIESIDLSFNVLHGPIPHDLTKL, and YIVVFNVSYNNLSGLIPSQGKFLS. N-linked (GlcNAc...) asparagine glycosylation is present at asparagine 140. 2 N-linked (GlcNAc...) asparagine glycosylation sites follow: asparagine 261 and asparagine 295. Asparagine 352 and asparagine 380 each carry an N-linked (GlcNAc...) asparagine glycan. Residues asparagine 420, asparagine 425, and asparagine 454 are each glycosylated (N-linked (GlcNAc...) asparagine). Residues asparagine 524, asparagine 551, and asparagine 560 are each glycosylated (N-linked (GlcNAc...) asparagine). 2 N-linked (GlcNAc...) asparagine glycosylation sites follow: asparagine 666 and asparagine 675. Residues asparagine 776 and asparagine 792 are each glycosylated (N-linked (GlcNAc...) asparagine). Residues asparagine 824, asparagine 829, asparagine 860, and asparagine 866 are each glycosylated (N-linked (GlcNAc...) asparagine). Residues 889–909 traverse the membrane as a helical segment; sequence FYWSLFATYGITWMAFIVFLC. At 910–932 the chain is on the cytoplasmic side; that stretch reads FDSPWRQAWFRLVNVFVSFLKCV.

It belongs to the RLP family.

Its subcellular location is the cell membrane. The chain is Receptor-like protein 9a from Arabidopsis thaliana (Mouse-ear cress).